A 410-amino-acid chain; its full sequence is Imidazolonepropionase (410 aa).

Fe(3+)-binding residues include histidine 73 and histidine 75. Zn(2+)-binding residues include histidine 73 and histidine 75. 3 residues coordinate 4-imidazolone-5-propanoate: arginine 82, tyrosine 145, and histidine 178. Residue tyrosine 145 coordinates N-formimidoyl-L-glutamate. A Fe(3+)-binding site is contributed by histidine 243. Histidine 243 is a Zn(2+) binding site. Glutamine 246 is a binding site for 4-imidazolone-5-propanoate. A Fe(3+)-binding site is contributed by aspartate 318. A Zn(2+)-binding site is contributed by aspartate 318. Residues asparagine 320 and glycine 322 each coordinate N-formimidoyl-L-glutamate. A 4-imidazolone-5-propanoate-binding site is contributed by serine 323.

Belongs to the metallo-dependent hydrolases superfamily. HutI family. Requires Zn(2+) as cofactor. The cofactor is Fe(3+).

The protein localises to the cytoplasm. It carries out the reaction 4-imidazolone-5-propanoate + H2O = N-formimidoyl-L-glutamate. It functions in the pathway amino-acid degradation; L-histidine degradation into L-glutamate; N-formimidoyl-L-glutamate from L-histidine: step 3/3. Catalyzes the hydrolytic cleavage of the carbon-nitrogen bond in imidazolone-5-propanoate to yield N-formimidoyl-L-glutamate. It is the third step in the universal histidine degradation pathway. This Shewanella baltica (strain OS223) protein is Imidazolonepropionase.